Consider the following 139-residue polypeptide: Gastrula zinc finger protein XlCGF67.1 (139 aa).

5 consecutive C2H2-type zinc fingers follow at residues 6–28 (VSCP…KKVH), 33–55 (YSCS…LRTH), 61–83 (YSCS…KRIH), 89–111 (FSCQ…QKIH), and 117–139 (FSCS…SRIH).

The protein belongs to the krueppel C2H2-type zinc-finger protein family.

Its subcellular location is the nucleus. May be involved in transcriptional regulation. The polypeptide is Gastrula zinc finger protein XlCGF67.1 (Xenopus laevis (African clawed frog)).